The following is a 286-amino-acid chain: Pantothenate synthetase (286 aa).

Met-30–His-37 is a binding site for ATP. His-37 acts as the Proton donor in catalysis. Gln-61 lines the (R)-pantoate pocket. Gln-61 lines the beta-alanine pocket. Position 147–150 (Gly-147–Asp-150) interacts with ATP. Gln-153 serves as a coordination point for (R)-pantoate. Residues Leu-176 and His-184–Arg-187 each bind ATP.

Belongs to the pantothenate synthetase family. In terms of assembly, homodimer.

The protein resides in the cytoplasm. The enzyme catalyses (R)-pantoate + beta-alanine + ATP = (R)-pantothenate + AMP + diphosphate + H(+). Its pathway is cofactor biosynthesis; (R)-pantothenate biosynthesis; (R)-pantothenate from (R)-pantoate and beta-alanine: step 1/1. Its function is as follows. Catalyzes the condensation of pantoate with beta-alanine in an ATP-dependent reaction via a pantoyl-adenylate intermediate. The sequence is that of Pantothenate synthetase from Bartonella tribocorum (strain CIP 105476 / IBS 506).